A 2867-amino-acid polypeptide reads, in one-letter code: Reticulocyte-binding protein 2 (2867 aa).

An N-terminal signal peptide occupies residues 1-21 (MEKNVLWVIFYNFLVILLASC). Residues 22-2805 (NDSNRSKSNS…TAKEAIGKTR (2784 aa)) lie on the Extracellular side of the membrane. Disordered stretches follow at residues 52–73 (KYNN…NNHN), 2650–2682 (ETKT…ASVP), and 2712–2799 (DNTH…TAKE). Residues 61–73 (NIGNQINNDNNHN) show a composition bias toward low complexity. Positions 2659-2674 (KAKEEKVPPKETENRA) are enriched in basic and acidic residues. The span at 2725–2736 (DSISAPQEQVEY) shows a compositional bias: polar residues. The span at 2743-2754 (ENDETTEEESEH) shows a compositional bias: acidic residues. A compositionally biased stretch (basic and acidic residues) spans 2755-2799 (DDAHDDTHDDTHDDTHDDTHDDTHDDTHDDTHDESQTGRDSTAKE). Repeat copies occupy residues 2758–2761 (HDDT), 2762–2765 (HDDT), 2766–2769 (HDDT), 2770–2773 (HDDT), 2774–2777 (HDDT), 2778–2781 (HDDT), and 2782–2785 (HDDT). Positions 2758-2785 (HDDTHDDTHDDTHDDTHDDTHDDTHDDT) are 7 X 4 AA tandem repeats of H-D-D-T. Residues 2806–2826 (LAGAVIIAMSVLSGFIIIVFK) traverse the membrane as a helical segment. Over 2827-2867 (DKDEEEKDHNEHGYNEAFGEHDEYNMHDKEEVIEVCFNEED) the chain is Cytoplasmic.

The protein localises to the cell membrane. In terms of biological role, involved in reticulocyte adhesion. Specifically binds to human reticulocyte cells. The protein is Reticulocyte-binding protein 2 (RBP-2) of Plasmodium vivax (strain Belem).